Consider the following 148-residue polypeptide: Deoxyuridine 5'-triphosphate nucleotidohydrolase (148 aa).

Substrate contacts are provided by residues 68–70, Asn-81, 85–87, and Lys-95; these read RSG and TID.

It belongs to the dUTPase family. Requires Mg(2+) as cofactor.

It carries out the reaction dUTP + H2O = dUMP + diphosphate + H(+). Its pathway is pyrimidine metabolism; dUMP biosynthesis; dUMP from dCTP (dUTP route): step 2/2. Functionally, this enzyme is involved in nucleotide metabolism: it produces dUMP, the immediate precursor of thymidine nucleotides and it decreases the intracellular concentration of dUTP so that uracil cannot be incorporated into DNA. This Rickettsia prowazekii (strain Madrid E) protein is Deoxyuridine 5'-triphosphate nucleotidohydrolase.